The primary structure comprises 477 residues: Bifunctional protein HldE (477 aa).

The segment at Met-1 to Thr-319 is ribokinase. Residue Asn-195–Glu-198 participates in ATP binding. Asp-264 is an active-site residue. Residues Met-346–Asn-477 are cytidylyltransferase.

It in the N-terminal section; belongs to the carbohydrate kinase PfkB family. In the C-terminal section; belongs to the cytidylyltransferase family. In terms of assembly, homodimer.

The enzyme catalyses D-glycero-beta-D-manno-heptose 7-phosphate + ATP = D-glycero-beta-D-manno-heptose 1,7-bisphosphate + ADP + H(+). It carries out the reaction D-glycero-beta-D-manno-heptose 1-phosphate + ATP + H(+) = ADP-D-glycero-beta-D-manno-heptose + diphosphate. Its pathway is nucleotide-sugar biosynthesis; ADP-L-glycero-beta-D-manno-heptose biosynthesis; ADP-L-glycero-beta-D-manno-heptose from D-glycero-beta-D-manno-heptose 7-phosphate: step 1/4. The protein operates within nucleotide-sugar biosynthesis; ADP-L-glycero-beta-D-manno-heptose biosynthesis; ADP-L-glycero-beta-D-manno-heptose from D-glycero-beta-D-manno-heptose 7-phosphate: step 3/4. Catalyzes the phosphorylation of D-glycero-D-manno-heptose 7-phosphate at the C-1 position to selectively form D-glycero-beta-D-manno-heptose-1,7-bisphosphate. In terms of biological role, catalyzes the ADP transfer from ATP to D-glycero-beta-D-manno-heptose 1-phosphate, yielding ADP-D-glycero-beta-D-manno-heptose. This Blochmanniella pennsylvanica (strain BPEN) protein is Bifunctional protein HldE.